Here is a 91-residue protein sequence, read N- to C-terminus: Elongation factor 1-beta (91 aa).

Homodimer.

Promotes the exchange of GDP for GTP in EF-1-alpha/GDP, thus allowing the regeneration of EF-1-alpha/GTP that could then be used to form the ternary complex EF-1-alpha/GTP/AAtRNA. The protein is Elongation factor 1-beta (ef1b) of Saccharolobus solfataricus (strain ATCC 35092 / DSM 1617 / JCM 11322 / P2) (Sulfolobus solfataricus).